A 386-amino-acid polypeptide reads, in one-letter code: Dual-specificity RNA methyltransferase RlmN (386 aa).

The active-site Proton acceptor is the E96. Residues 102–340 (ENDRATLCVS…VITRRTRGED (239 aa)) form the Radical SAM core domain. Cysteines 109 and 345 form a disulfide. [4Fe-4S] cluster is bound by residues C116, C120, and C123. S-adenosyl-L-methionine is bound by residues 170 to 171 (GE), S202, 224 to 226 (SIH), and N302. C345 acts as the S-methylcysteine intermediate in catalysis.

The protein belongs to the radical SAM superfamily. RlmN family. The cofactor is [4Fe-4S] cluster.

Its subcellular location is the cytoplasm. It catalyses the reaction adenosine(2503) in 23S rRNA + 2 reduced [2Fe-2S]-[ferredoxin] + 2 S-adenosyl-L-methionine = 2-methyladenosine(2503) in 23S rRNA + 5'-deoxyadenosine + L-methionine + 2 oxidized [2Fe-2S]-[ferredoxin] + S-adenosyl-L-homocysteine. The catalysed reaction is adenosine(37) in tRNA + 2 reduced [2Fe-2S]-[ferredoxin] + 2 S-adenosyl-L-methionine = 2-methyladenosine(37) in tRNA + 5'-deoxyadenosine + L-methionine + 2 oxidized [2Fe-2S]-[ferredoxin] + S-adenosyl-L-homocysteine. Functionally, specifically methylates position 2 of adenine 2503 in 23S rRNA and position 2 of adenine 37 in tRNAs. m2A2503 modification seems to play a crucial role in the proofreading step occurring at the peptidyl transferase center and thus would serve to optimize ribosomal fidelity. In Colwellia psychrerythraea (strain 34H / ATCC BAA-681) (Vibrio psychroerythus), this protein is Dual-specificity RNA methyltransferase RlmN.